Reading from the N-terminus, the 533-residue chain is Probable protein kinase UbiB (533 aa).

A helical transmembrane segment spans residues 24 to 44; it reads LILELPMLPWWLRLLGATLPW. The region spanning 126–494 is the Protein kinase domain; it reads RFEREPLASA…WKGSRHDWLG (369 aa). ATP-binding positions include 132-140 and Lys154; that span reads LASASVAQV. Asp289 (proton acceptor) is an active-site residue. Residues 510-530 form a helical membrane-spanning segment; that stretch reads LGQQLEAWPAWVMLAGGVFLI.

Belongs to the ABC1 family. UbiB subfamily.

It is found in the cell inner membrane. The protein operates within cofactor biosynthesis; ubiquinone biosynthesis [regulation]. In terms of biological role, is probably a protein kinase regulator of UbiI activity which is involved in aerobic coenzyme Q (ubiquinone) biosynthesis. This Pseudomonas aeruginosa (strain LESB58) protein is Probable protein kinase UbiB.